The following is a 391-amino-acid chain: Formate-dependent phosphoribosylglycinamide formyltransferase (391 aa).

Residues 20–21 (EL) and Glu80 each bind N(1)-(5-phospho-beta-D-ribosyl)glycinamide. Residues Arg112, Lys153, 158–163 (SSGKGQ), 193–196 (EGFI), and Glu201 contribute to the ATP site. Residues 117-306 (RLAAETLGLP…EFALHVRAIL (190 aa)) form the ATP-grasp domain. 2 residues coordinate Mg(2+): Glu265 and Glu277. N(1)-(5-phospho-beta-D-ribosyl)glycinamide-binding positions include Asp284, Lys354, and 361-362 (RR).

The protein belongs to the PurK/PurT family. Homodimer.

It catalyses the reaction N(1)-(5-phospho-beta-D-ribosyl)glycinamide + formate + ATP = N(2)-formyl-N(1)-(5-phospho-beta-D-ribosyl)glycinamide + ADP + phosphate + H(+). It participates in purine metabolism; IMP biosynthesis via de novo pathway; N(2)-formyl-N(1)-(5-phospho-D-ribosyl)glycinamide from N(1)-(5-phospho-D-ribosyl)glycinamide (formate route): step 1/1. Functionally, involved in the de novo purine biosynthesis. Catalyzes the transfer of formate to 5-phospho-ribosyl-glycinamide (GAR), producing 5-phospho-ribosyl-N-formylglycinamide (FGAR). Formate is provided by PurU via hydrolysis of 10-formyl-tetrahydrofolate. This is Formate-dependent phosphoribosylglycinamide formyltransferase from Shewanella sp. (strain MR-7).